The primary structure comprises 121 residues: Regulator of ribonuclease activity B (121 aa).

Belongs to the RraB family. As to quaternary structure, interacts with the C-terminal region of Rne.

The protein localises to the cytoplasm. Globally modulates RNA abundance by binding to RNase E (Rne) and regulating its endonucleolytic activity. Can modulate Rne action in a substrate-dependent manner by altering the composition of the degradosome. In Psychromonas ingrahamii (strain DSM 17664 / CCUG 51855 / 37), this protein is Regulator of ribonuclease activity B.